The chain runs to 216 residues: Splicing factor U2AF 23 kDa subunit (216 aa).

The C3H1-type 1 zinc-finger motif lies at 12-40 (EQDKVNCSFYYKIGACRHGERCSRKHVKP). Residues 44-141 (QTILCPNMYK…RPVYAELSPV (98 aa)) enclose the RRM domain. The C3H1-type 2 zinc-finger motif lies at 143–170 (DFREACCRQHETSECQRGGLCNFMHAKK). Residues 194 to 216 (EMKKEPNSDSTNRWVSVTAERKN) are disordered.

In terms of assembly, forms a heterodimer with the U2AF large subunit. Can also form a homodimer. U2AF large subunit (U2AF59), U2AF small subunit (U2AF23) and SF1 (bpb1) interact to form a complex required for complex A formation. Interacts with cwf13.

The protein resides in the nucleus. Necessary for the splicing of pre-mRNA. The SF1-U2AF59-U2AF23 complex has a role in the recognition of the branch site (5'-UACUAAC-3'), the pyrimidine tract and the 3'-splice site at the 3'-end of introns. This is Splicing factor U2AF 23 kDa subunit from Schizosaccharomyces pombe (strain 972 / ATCC 24843) (Fission yeast).